Consider the following 846-residue polypeptide: Aminopeptidase N (846 aa).

Substrate contacts are provided by residues glutamate 120 and 252–256 (GAMEN). Residue histidine 288 participates in Zn(2+) binding. The active-site Proton acceptor is the glutamate 289. Residues histidine 292 and glutamate 311 each coordinate Zn(2+).

The protein belongs to the peptidase M1 family. In terms of assembly, monomer. Requires Zn(2+) as cofactor.

It is found in the cytoplasm. It catalyses the reaction Release of an N-terminal amino acid, Xaa-|-Yaa- from a peptide, amide or arylamide. Xaa is preferably Ala, but may be most amino acids including Pro (slow action). When a terminal hydrophobic residue is followed by a prolyl residue, the two may be released as an intact Xaa-Pro dipeptide.. Its function is as follows. Aminopeptidase with broad substrate specificity to several peptides. It has more affinity for oligopeptides than for dipeptides. It plays an essential role in the metabolism, it may be involved in nitrogen supply or protein turnover. This chain is Aminopeptidase N (pepN), found in Lactococcus lactis subsp. cremoris (Streptococcus cremoris).